Reading from the N-terminus, the 342-residue chain is Glycerol-3-phosphate dehydrogenase [NAD(P)+] (342 aa).

3 residues coordinate NADPH: S13, W14, and K108. Positions 108, 139, and 141 each coordinate sn-glycerol 3-phosphate. A143 contacts NADPH. Sn-glycerol 3-phosphate-binding residues include K194, D247, S257, R258, and N259. The Proton acceptor role is filled by K194. Residue R258 participates in NADPH binding. The NADPH site is built by V282 and E284.

The protein belongs to the NAD-dependent glycerol-3-phosphate dehydrogenase family.

Its subcellular location is the cytoplasm. The enzyme catalyses sn-glycerol 3-phosphate + NAD(+) = dihydroxyacetone phosphate + NADH + H(+). It catalyses the reaction sn-glycerol 3-phosphate + NADP(+) = dihydroxyacetone phosphate + NADPH + H(+). Its pathway is membrane lipid metabolism; glycerophospholipid metabolism. Catalyzes the reduction of the glycolytic intermediate dihydroxyacetone phosphate (DHAP) to sn-glycerol 3-phosphate (G3P), the key precursor for phospholipid synthesis. In Lactococcus lactis subsp. cremoris (strain SK11), this protein is Glycerol-3-phosphate dehydrogenase [NAD(P)+].